A 495-amino-acid polypeptide reads, in one-letter code: MFS transporter prlL (495 aa).

The segment at 1–24 is disordered; sequence MAQSFANEHDPAKRAEERGHVGTI. Residues 7–20 show a composition bias toward basic and acidic residues; it reads NEHDPAKRAEERGH. 11 consecutive transmembrane segments (helical) span residues 102–122, 130–150, 159–179, 189–209, 224–244, 292–312, 329–349, 356–376, 386–406, 418–438, and 449–469; these read IALM…NVLL, WIAI…GAHN, FLLG…LTFW, VAFI…IAYA, WLFI…LFFL, LWAH…LSLF, LMTV…SWSA, GLHS…SAVL, GCLI…LGWL, LAIA…GVWI, and PTGH…CVAL.

This sequence belongs to the major facilitator superfamily.

It is found in the cell membrane. In terms of biological role, efflux pump that might be required for efficient secretion of pyrrolocin or other secondary metabolies produced by the pyrrolocin gene cluster. The sequence is that of MFS transporter prlL from Fungal sp. (strain NRRL 50135).